A 195-amino-acid polypeptide reads, in one-letter code: Myelin basic protein (195 aa).

The residue at position 2 (alanine 2) is an N-acetylalanine. Serine 8 and serine 13 each carry phosphoserine. Position 15 is a phosphotyrosine (tyrosine 15). Threonine 18 is subject to Phosphothreonine. A Phosphoserine modification is found at serine 20. Residue threonine 21 is modified to Phosphothreonine. Citrulline occurs at positions 26 and 32. Threonine 36 is modified (phosphothreonine). Serine 41 bears the Phosphoserine mark. Arginine 44 and arginine 50 each carry omega-N-methylarginine. Residues 45–79 (FFSGDRGAPKRGSGKVPWLKQSRSPLPSHARSRPG) form a disordered region. Serine 57 is subject to Phosphoserine. A Phosphothreonine modification is found at threonine 92. Residue tyrosine 94 is modified to Phosphotyrosine. Serine 101 bears the Phosphoserine mark. 3 positions are modified to phosphothreonine: threonine 104, threonine 119, and threonine 122. Residues 117 to 139 (IVTPRTPPPSQGKGRGLSLSRFS) are disordered. Glutamine 127 carries the post-translational modification Deamidated glutamine. Arginine 131 carries the omega-N-methylarginine; alternate modification. A Symmetric dimethylarginine; alternate modification is found at arginine 131. Phosphoserine is present on serine 139. The residue at position 146 (lysine 146) is an N6-acetyllysine. At arginine 154 the chain carries Citrulline. At glutamine 172 the chain carries Deamidated glutamine. Citrulline is present on arginine 184. At serine 186 the chain carries Phosphoserine. Serine 190 is modified (phosphoserine; by UHMK1). A Citrulline modification is found at arginine 195.

This sequence belongs to the myelin basic protein family. As to quaternary structure, homodimer. As in other animals, several charge isomers may be produced as a result of optional post-translational modifications, such as phosphorylation of serine or threonine residues, deamidation of glutamine or asparagine residues, citrullination and methylation of arginine residues. Post-translationally, arg-131 was found to be 44% monomethylated and 11% symmetrically dimethylated. In terms of processing, phosphorylated by TAOK2, VRK2, MAPK11, MAPK12, MAPK14 and MINK1. Proteolytically cleaved in B cell lysosomes by cathepsin CTSG which degrades the major immunogenic MBP epitope and prevents the activation of MBP-specific autoreactive T cells. Found in both the central and the peripheral nervous system.

It localises to the myelin membrane. Is, with PLP, the most abundant protein component of the myelin membrane in the CNS. Has a role in both the formation and stabilization of this compact multilayer arrangement of bilayers. Each splice variant and charge isomer may have a specialized function in the assembly of an optimized, biochemically functional myelin membrane. The protein is Myelin basic protein (Mbp) of Rattus norvegicus (Rat).